The primary structure comprises 287 residues: 4-hydroxybenzoate octaprenyltransferase (287 aa).

Transmembrane regions (helical) follow at residues 19–39, 42–62, 95–115, 136–156, 166–186, 210–230, 233–253, and 264–284; these read IGSLLLLWPTLWALFLAADGL, WHVLIVFVLGVVFMRSAGCVI, FFAVLVVCSFLLVLTMNTLTI, YLPQFVLGLAFSWAIPMAYAA, WLLFVINALWTIAYDTQYAMV, IIGLLQLSVLALLIVLGSQLA, GIYYWGILAAAGFFVYQQWLI, and AFLNNNYVGGLIFIAISASVL.

Belongs to the UbiA prenyltransferase family. Mg(2+) is required as a cofactor.

It localises to the cell inner membrane. It catalyses the reaction all-trans-octaprenyl diphosphate + 4-hydroxybenzoate = 4-hydroxy-3-(all-trans-octaprenyl)benzoate + diphosphate. The protein operates within cofactor biosynthesis; ubiquinone biosynthesis. In terms of biological role, catalyzes the prenylation of para-hydroxybenzoate (PHB) with an all-trans polyprenyl group. Mediates the second step in the final reaction sequence of ubiquinone-8 (UQ-8) biosynthesis, which is the condensation of the polyisoprenoid side chain with PHB, generating the first membrane-bound Q intermediate 3-octaprenyl-4-hydroxybenzoate. This Aliivibrio fischeri (strain MJ11) (Vibrio fischeri) protein is 4-hydroxybenzoate octaprenyltransferase.